Here is a 652-residue protein sequence, read N- to C-terminus: Putative glycine--tRNA ligase (652 aa).

Residues 119–145 (GDKEARGQNSNDQPEESDDKKKRKKKV) are disordered. Residue E221 participates in glycine binding. ATP-binding positions include 253 to 255 (RNE) and 264 to 265 (RV). E272 is a binding site for glycine. 380 to 381 (EC) is a binding site for ATP. Residue 499 to 501 (EPS) coordinates glycine. ATP is bound at residue R506.

It belongs to the class-II aminoacyl-tRNA synthetase family. As to quaternary structure, homodimer.

The protein localises to the cytoplasm. The enzyme catalyses tRNA(Gly) + glycine + ATP = glycyl-tRNA(Gly) + AMP + diphosphate. It carries out the reaction 2 ATP + H(+) = P(1),P(4)-bis(5'-adenosyl) tetraphosphate + diphosphate. Functionally, catalyzes the ATP-dependent ligation of glycine to the 3'-end of its cognate tRNA, via the formation of an aminoacyl-adenylate intermediate (Gly-AMP). Also produces diadenosine tetraphosphate (Ap4A), a universal pleiotropic signaling molecule needed for cell regulation pathways, by direct condensation of 2 ATPs. Thereby, may play a special role in Ap4A homeostasis. The sequence is that of Putative glycine--tRNA ligase (grs1) from Schizosaccharomyces pombe (strain 972 / ATCC 24843) (Fission yeast).